An 808-amino-acid polypeptide reads, in one-letter code: Phospholipase D alpha 1 (808 aa).

One can recognise a C2 domain in the interval 1-125 (MAQILLHGTL…LEGEEIDKWV (125 aa)). Asp186 lines the Ca(2+) pocket. The 39-residue stretch at 326 to 364 (TMFTHHQKIVVVDSELPSGESEKRRILSFVGGIDLCDGR) folds into the PLD phosphodiesterase 1 domain. Active-site residues include His331, Lys333, and Asp338. Residue His331 participates in a 1,2-diacyl-sn-glycero-3-phosphate binding. 2 residues coordinate Ca(2+): His370 and His404. 2 residues coordinate a 1,2-diacyl-sn-glycero-3-phosphate: Gln520 and His659. The PLD phosphodiesterase 2 domain occupies 654–681 (FMIYVHSKMMIVDDEYIIVGSANINQRS). Residues His659, Lys661, and Asp666 contribute to the active site. A Ca(2+)-binding site is contributed by Glu720.

It belongs to the phospholipase D family. C2-PLD subfamily. The cofactor is Ca(2+).

It carries out the reaction a 1,2-diacyl-sn-glycero-3-phosphocholine + H2O = a 1,2-diacyl-sn-glycero-3-phosphate + choline + H(+). Functionally, hydrolyzes glycerol-phospholipids at the terminal phosphodiesteric bond. Plays an important role in various cellular processes. The protein is Phospholipase D alpha 1 (PLD1) of Nicotiana tabacum (Common tobacco).